Reading from the N-terminus, the 4151-residue chain is Mycoketide-CoA synthase (4151 aa).

Positions V2–R32 form a coiled coil. The 424-residue stretch at S34–A457 folds into the Ketosynthase family 3 (KS3) 1 domain. Module regions lie at residues E35–L2038 and D2057–L4070. Residue C203 is the Acyl-thioester intermediate; for beta-ketoacyl synthase 1 activity of the active site. Residues H338 and H379 each act as for beta-ketoacyl synthase 1 activity in the active site. The tract at residues V559–A880 is acyltransferase 1. The active-site Acyl-ester intermediate; for acyltransferase 1 activity is the S650. An N-terminal hotdog fold 1 region spans residues H926 to P1048. The tract at residues H926–L1194 is dehydratase 1. Positions H926–L1195 constitute a PKS/mFAS DH 1 domain. H958 functions as the Proton acceptor; for dehydratase activity 1 in the catalytic mechanism. The C-terminal hotdog fold 1 stretch occupies residues A1060–L1195. D1120 serves as the catalytic Proton donor; for dehydratase activity 1. The segment at G1366–M1671 is enoyl reductase 1. A beta-ketoacyl reductase 1 region spans residues G1680–D1858. Y1828 serves as the catalytic For beta-ketoacyl reductase 1 activity. Residues A1963–L2038 form the Carrier 1 domain. An O-(pantetheine 4'-phosphoryl)serine modification is found at S1998. Positions E2056 to A2480 constitute a Ketosynthase family 3 (KS3) 2 domain. The active-site Acyl-thioester intermediate; for beta-ketoacyl synthase 2 activity is C2226. Catalysis depends on for beta-ketoacyl synthase 2 activity residues H2361 and H2402. Residues V2582–M2893 form an acyltransferase 2 region. S2672 (acyl-ester intermediate; for acyltransferase 2 activity) is an active-site residue. Residues H2940 to P3062 form an N-terminal hotdog fold 2 region. The interval H2940–R3215 is dehydratase 2. Residues H2940 to R3215 form the PKS/mFAS DH 2 domain. H2972 (proton acceptor; for dehydratase activity 2) is an active-site residue. The interval A3074–R3215 is C-terminal hotdog fold 2. The active-site Proton donor; for dehydratase activity 2 is D3135. The interval G3395 to M3701 is enoyl reductase 2. The segment at G3710–D3888 is beta-ketoacyl reductase 2. Y3858 functions as the For beta-ketoacyl reductase 2 activity in the catalytic mechanism. The Carrier 2 domain maps to A3995–L4070. At S4030 the chain carries O-(pantetheine 4'-phosphoryl)serine.

In terms of assembly, forms a large supramolecular assembly mediated through specific interactions between the N- and C-terminus linkers.

The enzyme catalyses a medium-chain fatty acyl-CoA + 5 (S)-methylmalonyl-CoA + 5 malonyl-CoA + 22 NADPH + 32 H(+) = a mycoketide-CoA + 10 CO2 + 22 NADP(+) + 10 CoA + 11 H2O. It functions in the pathway lipid metabolism; fatty acid metabolism. Involved in the synthesis of beta-D-mannosyl phosphomycoketide (MPM), an antigenic mycobacterial polyketide. Binds a fatty acyl-CoA as a starter unit, and extends it by five rounds of alternative additions of malonyl-CoA and methylmalonyl-CoA extender units. Depending on the starter unit, the enzyme forms mycoketide-CoAs of different lengths. Shows preference for small-/medium-chain starter fatty acyl substrates. Uses a hybrid modularly iterative mechanism, by forming a supramolecular assembly to perform repetitive cycles of iterations. The chain is Mycoketide-CoA synthase from Mycobacterium tuberculosis (strain ATCC 25618 / H37Rv).